The sequence spans 241 residues: Ribose-5-phosphate isomerase A (241 aa).

Residues 29–32 (TGTT), 84–87 (DGAD), and 97–100 (KGGG) each bind substrate. Glu-106 (proton acceptor) is an active-site residue. Substrate is bound at residue Lys-124.

Belongs to the ribose 5-phosphate isomerase family. As to quaternary structure, homodimer.

It carries out the reaction aldehydo-D-ribose 5-phosphate = D-ribulose 5-phosphate. The protein operates within carbohydrate degradation; pentose phosphate pathway; D-ribose 5-phosphate from D-ribulose 5-phosphate (non-oxidative stage): step 1/1. Its function is as follows. Catalyzes the reversible conversion of ribose-5-phosphate to ribulose 5-phosphate. This is Ribose-5-phosphate isomerase A from Thermoplasma volcanium (strain ATCC 51530 / DSM 4299 / JCM 9571 / NBRC 15438 / GSS1).